Here is a 251-residue protein sequence, read N- to C-terminus: Leucine-rich repeat and calponin homology domain-containing protein 1 (251 aa).

Positions 73–97 (SNGSEYSPNEIRANSPAISPTANST) are disordered. A phosphoserine mark is found at Ser87 and Ser91. A compositionally biased stretch (polar residues) spans 88-97 (PAISPTANST). The residue at position 123 (Thr123) is a Phosphothreonine. The Calponin-homology (CH) domain occupies 131-244 (MREEKELVEH…ITVQALLDVT (114 aa)).

In terms of assembly, interacts (via LRR repeats) with unphosphorylated DOCK8 (via DHR-2 domain); the interaction prevents the interaction between DOCK8 and CDC42.

It is found in the cytoplasm. Its function is as follows. Acts as a negative regulator of GTPase CDC42 by sequestering CDC42-guanine exchange factor DOCK8. Probably by preventing CDC42 activation, negatively regulates CD4(+) T-cell migration. The sequence is that of Leucine-rich repeat and calponin homology domain-containing protein 1 from Felis catus (Cat).